A 635-amino-acid chain; its full sequence is MTVVRLPDGTDKVFDYPVTVLDVAESIGPGLARVALAGKLNGRLVDLSEPIEIDSDLVLITNKDPEGLEIIRHSCAHLLAHAVKELFPSAQVTIGPVIEDGFYYDFSYERPFTPEDLAAIEKRMQEISRRNLKIERKVWDRSKAIGFFKDLGEHYKAQIIASIPNDEPVSLYSQGDFTDLCRGPHVPYTSRIKVFKLMKIAGAYWRGDSKNEMLQRIYGTAWVSSEEQNNYLRRLEEAEKRDHRKLGKQLDLFHMQEEAPGMVYWHPKGWAIWQQIEQYMRQVLAKNGYVEIRTPQVLDISLWEKSGHWENFRENMFITESESRHYAIKPMNCPGHVQVFNHGLRSYRDLPLRLAEFGSCHRNEASGALHGLMRVRSFTQDDAHIFCTEDQVLEEVTKFIDLLNQVYIDFGFHENLIKLSTRPAQRVGTEEQWDRAEAALAAALNQKELNWELQPGEGAFYGPKIEFTLKDSLGRKWQCGTLQLDFSMPARLGAGYIAEDNTKKIPVMLHRAILGSMERFIGILIEHHAGALPVWLSPDQVVVLNISRNQADYVQSITNELKQNDIRVSSDLRNEKISYKIREHSLQKVPYLIVVGDKEVENQTVTVRGRSNHDHGAMSLEGFVTLIRKEMAERV.

The region spanning 1 to 61 (MTVVRLPDGT…EIDSDLVLIT (61 aa)) is the TGS domain. The interval 242–533 (DHRKLGKQLD…LIEHHAGALP (292 aa)) is catalytic. Positions 333, 384, and 510 each coordinate Zn(2+).

Belongs to the class-II aminoacyl-tRNA synthetase family. In terms of assembly, homodimer. Requires Zn(2+) as cofactor.

It localises to the cytoplasm. The enzyme catalyses tRNA(Thr) + L-threonine + ATP = L-threonyl-tRNA(Thr) + AMP + diphosphate + H(+). Catalyzes the attachment of threonine to tRNA(Thr) in a two-step reaction: L-threonine is first activated by ATP to form Thr-AMP and then transferred to the acceptor end of tRNA(Thr). Also edits incorrectly charged L-seryl-tRNA(Thr). In Nitrosomonas eutropha (strain DSM 101675 / C91 / Nm57), this protein is Threonine--tRNA ligase.